A 154-amino-acid polypeptide reads, in one-letter code: Ribosome maturation factor RimP (154 aa).

It belongs to the RimP family.

It is found in the cytoplasm. Functionally, required for maturation of 30S ribosomal subunits. The chain is Ribosome maturation factor RimP from Clostridium perfringens (strain ATCC 13124 / DSM 756 / JCM 1290 / NCIMB 6125 / NCTC 8237 / Type A).